The following is a 429-amino-acid chain: Methylenetetrahydrofolate--tRNA-(uracil-5-)-methyltransferase TrmFO (429 aa).

Residue 7 to 12 (GAGLAG) participates in FAD binding.

It belongs to the MnmG family. TrmFO subfamily. FAD serves as cofactor.

Its subcellular location is the cytoplasm. It catalyses the reaction uridine(54) in tRNA + (6R)-5,10-methylene-5,6,7,8-tetrahydrofolate + NADH + H(+) = 5-methyluridine(54) in tRNA + (6S)-5,6,7,8-tetrahydrofolate + NAD(+). The catalysed reaction is uridine(54) in tRNA + (6R)-5,10-methylene-5,6,7,8-tetrahydrofolate + NADPH + H(+) = 5-methyluridine(54) in tRNA + (6S)-5,6,7,8-tetrahydrofolate + NADP(+). In terms of biological role, catalyzes the folate-dependent formation of 5-methyl-uridine at position 54 (M-5-U54) in all tRNAs. This chain is Methylenetetrahydrofolate--tRNA-(uracil-5-)-methyltransferase TrmFO, found in Thermosipho melanesiensis (strain DSM 12029 / CIP 104789 / BI429).